The primary structure comprises 206 residues: Large ribosomal subunit protein uL4 (206 aa).

The tract at residues 63–93 (MYKQKGTGRARHHSARAPQFRGGGKAHGPVV) is disordered. The span at 64–77 (YKQKGTGRARHHSA) shows a compositional bias: basic residues.

It belongs to the universal ribosomal protein uL4 family. In terms of assembly, part of the 50S ribosomal subunit.

In terms of biological role, one of the primary rRNA binding proteins, this protein initially binds near the 5'-end of the 23S rRNA. It is important during the early stages of 50S assembly. It makes multiple contacts with different domains of the 23S rRNA in the assembled 50S subunit and ribosome. Forms part of the polypeptide exit tunnel. The sequence is that of Large ribosomal subunit protein uL4 from Sinorhizobium medicae (strain WSM419) (Ensifer medicae).